We begin with the raw amino-acid sequence, 156 residues long: Small ribosomal subunit protein uS7A/uS7B (156 aa).

Belongs to the universal ribosomal protein uS7 family. Part of the 30S ribosomal subunit. Contacts proteins S9 and S11.

Functionally, one of the primary rRNA binding proteins, it binds directly to 16S rRNA where it nucleates assembly of the head domain of the 30S subunit. Is located at the subunit interface close to the decoding center, probably blocks exit of the E-site tRNA. This is Small ribosomal subunit protein uS7A/uS7B from Cereibacter sphaeroides (strain ATCC 17029 / ATH 2.4.9) (Rhodobacter sphaeroides).